The chain runs to 99 residues: uncharacterized protein (99 aa).

This is an uncharacterized protein from Lepidoptera (butterflies and moths).